Reading from the N-terminus, the 391-residue chain is MDVDVQDDVQGRAGEGAEERAHDAARRHASVMLERCTRVLSPALDHPGAVTVDVTLGMGGHAHELLRRHPGLRLVGMDRDPQALELAAHRLHEFADRITLVHSVSDGLGEALDDLGLDTVDAVFFDLGVSSLQLDEAERGFSYARDTALDMRMDPGAPTTAADVLNTYSHSQLTRILRVYGEERFAPRIASAIVRERALEPFTSSARLVDLVRANVPAATRRTGGNPAKRTFQALRIEVNDELGVVERSLPVAFERLAPEGRLAVLTFHSLEDRIVKNALRELSSSSAPPDLPFVPAGSGPRAELLTRGGETADEAELAENPRAASARLRAVRRLPGEDRVSSPRVVPASRRRNRPGTGTAGNPARPRTQEFETHPHLEPGEPGATVERTP.

A disordered region spans residues 1–23 (MDVDVQDDVQGRAGEGAEERAHD). S-adenosyl-L-methionine contacts are provided by residues 59 to 61 (GGH), aspartate 78, leucine 112, aspartate 126, and glutamine 133. The interval 284-391 (SSSSAPPDLP…EPGATVERTP (108 aa)) is disordered. Positions 368-380 (RTQEFETHPHLEP) are enriched in basic and acidic residues.

It belongs to the methyltransferase superfamily. RsmH family.

Its subcellular location is the cytoplasm. It catalyses the reaction cytidine(1402) in 16S rRNA + S-adenosyl-L-methionine = N(4)-methylcytidine(1402) in 16S rRNA + S-adenosyl-L-homocysteine + H(+). In terms of biological role, specifically methylates the N4 position of cytidine in position 1402 (C1402) of 16S rRNA. The chain is Ribosomal RNA small subunit methyltransferase H from Kineococcus radiotolerans (strain ATCC BAA-149 / DSM 14245 / SRS30216).